A 602-amino-acid chain; its full sequence is Elongation factor 4 (602 aa).

Residues 2–184 (NHIRNFSIIA…AVVAKVPPPK (183 aa)) enclose the tr-type G domain. Residues 14–19 (DHGKST) and 131–134 (NKMD) each bind GTP.

Belongs to the TRAFAC class translation factor GTPase superfamily. Classic translation factor GTPase family. LepA subfamily.

It localises to the cell inner membrane. The catalysed reaction is GTP + H2O = GDP + phosphate + H(+). Functionally, required for accurate and efficient protein synthesis under certain stress conditions. May act as a fidelity factor of the translation reaction, by catalyzing a one-codon backward translocation of tRNAs on improperly translocated ribosomes. Back-translocation proceeds from a post-translocation (POST) complex to a pre-translocation (PRE) complex, thus giving elongation factor G a second chance to translocate the tRNAs correctly. Binds to ribosomes in a GTP-dependent manner. This is Elongation factor 4 from Delftia acidovorans (strain DSM 14801 / SPH-1).